The primary structure comprises 43 residues: Protein PsbN (43 aa).

The chain crosses the membrane as a helical span at residues 5 to 27 (ALVAISISRLLVSFTGYALYTAF).

The protein belongs to the PsbN family.

Its subcellular location is the plastid. The protein resides in the chloroplast thylakoid membrane. Functionally, may play a role in photosystem I and II biogenesis. The protein is Protein PsbN of Bowenia serrulata (Byfield fern).